The primary structure comprises 392 residues: MTTVGTALRPNATRVMLLGSGELGKEVALECQRLGVEVIAVDRYADAPAMQVAHRSHVIDMLDGAALAALIADEKPDFVVPEIEAIATDMLVELEKQGQHVVPTARAAKLTMDREGIRRLAAEELWVPTSDYRFADGYDAFQAAAEAIGFPCIVKPVMSSSGKGQSFIREASQLMAAWEYAQQGGRAGAGRVIVEGVVKFDFEITLLTISAVDGIHFCAPIGHRQEDGDYRESWQPQHMSELALQRARQVAEKVVTALGGHGLFGVELFVCGDEVVFSEVSPRPHDTGMVTLISQDVSEFALHVRAFLGLPVGAIRQYGPAASAVILPELDSDNVQYANLSAAVGAGLQLRLFGKPHIQGKRRLGVALATGLDIDEAVQRAVSAANGVKVSG.

N(1)-(5-phospho-beta-D-ribosyl)glycinamide contacts are provided by residues 22–23 (EL) and Glu82. ATP-binding positions include Arg114, Lys155, 160–165 (SSGKGQ), 195–198 (EGVV), and Glu203. One can recognise an ATP-grasp domain in the interval 119–308 (RLAAEELWVP…EFALHVRAFL (190 aa)). Positions 267 and 279 each coordinate Mg(2+). N(1)-(5-phospho-beta-D-ribosyl)glycinamide is bound by residues Asp286, Lys355, and 362 to 363 (RR).

The protein belongs to the PurK/PurT family. Homodimer.

It carries out the reaction N(1)-(5-phospho-beta-D-ribosyl)glycinamide + formate + ATP = N(2)-formyl-N(1)-(5-phospho-beta-D-ribosyl)glycinamide + ADP + phosphate + H(+). Its pathway is purine metabolism; IMP biosynthesis via de novo pathway; N(2)-formyl-N(1)-(5-phospho-D-ribosyl)glycinamide from N(1)-(5-phospho-D-ribosyl)glycinamide (formate route): step 1/1. Functionally, involved in the de novo purine biosynthesis. Catalyzes the transfer of formate to 5-phospho-ribosyl-glycinamide (GAR), producing 5-phospho-ribosyl-N-formylglycinamide (FGAR). Formate is provided by PurU via hydrolysis of 10-formyl-tetrahydrofolate. This Erwinia tasmaniensis (strain DSM 17950 / CFBP 7177 / CIP 109463 / NCPPB 4357 / Et1/99) protein is Formate-dependent phosphoribosylglycinamide formyltransferase.